We begin with the raw amino-acid sequence, 306 residues long: Probable 2-dehydro-3-deoxygalactonokinase DgoK1 (306 aa).

The protein belongs to the DgoK family.

It catalyses the reaction 2-dehydro-3-deoxy-D-galactonate + ATP = 2-dehydro-3-deoxy-6-phospho-D-galactonate + ADP + H(+). It participates in carbohydrate acid metabolism; D-galactonate degradation; D-glyceraldehyde 3-phosphate and pyruvate from D-galactonate: step 2/3. In terms of biological role, involved in the degradation of galactose via the DeLey-Doudoroff pathway. The chain is Probable 2-dehydro-3-deoxygalactonokinase DgoK1 (dgoK1) from Rhizobium meliloti (strain 1021) (Ensifer meliloti).